The following is a 312-amino-acid chain: Olfactory receptor 8K3 (312 aa).

The Extracellular segment spans residues 1 to 25 (MEQHNLTTVNEFILTGITDIAELQA). The N-linked (GlcNAc...) asparagine glycan is linked to asparagine 5. A helical membrane pass occupies residues 26-46 (PLFALFLMIYVISVMGNLGMI). Over 47 to 54 (VLTKLDSR) the chain is Cytoplasmic. The helical transmembrane segment at 55–75 (LQTPMYFFLRHLAFMDLGYST) threads the bilayer. Topologically, residues 76 to 99 (TVGPKMLVNFVVDKNIISYYFCAT) are extracellular. Cysteine 97 and cysteine 189 form a disulfide bridge. A helical membrane pass occupies residues 100–120 (QLAFFLVFIGSELFILSAMSY). At 121–139 (DLYVAICNPLLYTVIMSRR) the chain is on the cytoplasmic side. A helical membrane pass occupies residues 140 to 160 (VCQVLVAIPYLYCTFISLLVT). Topologically, residues 161-197 (IKIFTLSFCGYNVISHFYCDSLPLLPLLCSNTHEIEL) are extracellular. Residues 198 to 217 (IILIFAAIDLISSLLIVLLS) traverse the membrane as a helical segment. Residues 218–236 (YLLILVAILRMNSAGRQKA) are Cytoplasmic-facing. The helical transmembrane segment at 237–257 (FSTCGAHLTVVIVFYGTLLFM) threads the bilayer. Topologically, residues 258 to 270 (YVQPKSSHSFDTD) are extracellular. Residues 271-291 (KVASIFYTLVIPMLNPLIYSL) form a helical membrane-spanning segment. Over 292–312 (RNKDVKYALRRTWNNLCNIFV) the chain is Cytoplasmic.

Belongs to the G-protein coupled receptor 1 family.

The protein resides in the cell membrane. Functionally, odorant receptor. In Homo sapiens (Human), this protein is Olfactory receptor 8K3 (OR8K3).